Consider the following 495-residue polypeptide: Telomere-binding protein subunit alpha (495 aa).

Residues 1–13 (MSTAAKQNRSTSR) are compositionally biased toward polar residues. The interval 1–31 (MSTAAKQNRSTSRVSKKKTAAPKEGAAKKSD) is disordered.

This sequence belongs to the telombin family. In terms of assembly, heterodimer of an alpha and a beta subunit.

It localises to the nucleus. It is found in the chromosome. Its subcellular location is the telomere. In terms of biological role, may function as protective capping of the single-stranded telomeric overhang. May also participate in telomere length regulation during DNA replication. Binds specifically to the T4G4-containing extension on the 3'strand and protects this region of the telomere from nuclease digestion and chemical modification. This chain is Telomere-binding protein subunit alpha (MAC-56A), found in Sterkiella nova (Ciliate).